The following is a 550-amino-acid chain: Dihydroxy-acid dehydratase (550 aa).

A Mg(2+)-binding site is contributed by aspartate 78. Residue cysteine 119 participates in [2Fe-2S] cluster binding. Mg(2+)-binding residues include aspartate 120 and lysine 121. Lysine 121 is modified (N6-carboxylysine). Cysteine 191 contributes to the [2Fe-2S] cluster binding site. A Mg(2+)-binding site is contributed by glutamate 440. The active-site Proton acceptor is the serine 466.

Belongs to the IlvD/Edd family. As to quaternary structure, homodimer. [2Fe-2S] cluster is required as a cofactor. Mg(2+) serves as cofactor.

The catalysed reaction is (2R)-2,3-dihydroxy-3-methylbutanoate = 3-methyl-2-oxobutanoate + H2O. The enzyme catalyses (2R,3R)-2,3-dihydroxy-3-methylpentanoate = (S)-3-methyl-2-oxopentanoate + H2O. It participates in amino-acid biosynthesis; L-isoleucine biosynthesis; L-isoleucine from 2-oxobutanoate: step 3/4. The protein operates within amino-acid biosynthesis; L-valine biosynthesis; L-valine from pyruvate: step 3/4. In terms of biological role, functions in the biosynthesis of branched-chain amino acids. Catalyzes the dehydration of (2R,3R)-2,3-dihydroxy-3-methylpentanoate (2,3-dihydroxy-3-methylvalerate) into 2-oxo-3-methylpentanoate (2-oxo-3-methylvalerate) and of (2R)-2,3-dihydroxy-3-methylbutanoate (2,3-dihydroxyisovalerate) into 2-oxo-3-methylbutanoate (2-oxoisovalerate), the penultimate precursor to L-isoleucine and L-valine, respectively. In Methanococcus maripaludis (strain C6 / ATCC BAA-1332), this protein is Dihydroxy-acid dehydratase.